The chain runs to 309 residues: Olfactory receptor 8B4 (309 aa).

The Extracellular segment spans residues 1 to 25 (MTLRNSSSVTEFILVGLSEQPELQL). Residue Asn5 is glycosylated (N-linked (GlcNAc...) asparagine). Residues 26–46 (PLFLLFLGIYVFTVVGNLGLI) traverse the membrane as a helical segment. Over 47 to 54 (TLIGINPS) the chain is Cytoplasmic. The chain crosses the membrane as a helical span at residues 55-75 (LHTPMYFFLFNLSFIDLCYSC). The Extracellular portion of the chain corresponds to 76–98 (VFTPKMLNDFVSESIISYVGCMT). Cysteines 96 and 188 form a disulfide. The chain crosses the membrane as a helical span at residues 99–119 (QLFFFCFFVNSECYVLVSMAY). Topologically, residues 120-138 (DRYVAICNPLLYMVTMSPR) are cytoplasmic. The chain crosses the membrane as a helical span at residues 139-159 (VCFLLMFGSYVVGFAGAMAHT). Residues 160-196 (GSMLRLTFCDSNVIDHYLCDVLPLLQLSCTSTHVSEL) are Extracellular-facing. The chain crosses the membrane as a helical span at residues 197 to 216 (VFFIVVGVITMLSSISIVIS). Residues 217 to 236 (YALILSNILCIPSAEGRSKA) lie on the Cytoplasmic side of the membrane. The helical transmembrane segment at 237–257 (FSTWGSHIIAVALFFGSGTFT) threads the bilayer. Residues 258-270 (YLTTSFPGSMNHG) are Extracellular-facing. Residues 271–291 (RFASVFYTNVVPMLNPSIYSL) traverse the membrane as a helical segment. At 292 to 309 (RNKDDKLALGKTLKRVLF) the chain is on the cytoplasmic side.

The protein belongs to the G-protein coupled receptor 1 family.

The protein localises to the cell membrane. In terms of biological role, odorant receptor. The chain is Olfactory receptor 8B4 (OR8B4) from Homo sapiens (Human).